The following is a 538-amino-acid chain: Putative outer membrane porin BglH (538 aa).

Residues 1–25 (MFRRNIITSAILLMAPLAFSAQSLA) form the signal peptide.

The protein belongs to the porin LamB (TC 1.B.3) family.

The protein resides in the cell outer membrane. In terms of biological role, may be a sugar porin with a broad carbohydrate specificity. The protein is Putative outer membrane porin BglH (bglH) of Escherichia coli (strain UTI89 / UPEC).